We begin with the raw amino-acid sequence, 451 residues long: Gamma-aminobutyric acid receptor subunit alpha-2 (451 aa).

Residues 1–28 (MKTKLNIYNMQFLLFVFLVWDPARLVLA) form the signal peptide. At 29–249 (NIQEDEAKNN…MTAHFHLKRK (221 aa)) the chain is on the extracellular side. An N-linked (GlcNAc...) asparagine glycan is attached at N38. R94 is a binding site for 4-aminobutanoate. N-linked (GlcNAc...) asparagine glycosylation is present at N138. T157 is a binding site for 4-aminobutanoate. C166 and C180 are disulfide-bonded. A helical transmembrane segment spans residues 250-270 (IGYFVIQTYLPCIMTVILSQV). At 271 to 280 (SFWLNRESVP) the chain is on the cytoplasmic side. The chain crosses the membrane as a helical span at residues 281-300 (ARTVFGVTTVLTMTTLSISA). Over 301 to 311 (RNSLPKVAYAT) the chain is Extracellular. The chain crosses the membrane as a helical span at residues 312–332 (AMDWFIAVCYAFVFSALIEFA). Topologically, residues 333–420 (TVNYFTKRGW…FNSVSKIDRM (88 aa)) are cytoplasmic. The chain crosses the membrane as a helical span at residues 421–441 (SRIVFPVLFGTFNLVYWATYL). At 442 to 451 (NREPVLGVSP) the chain is on the extracellular side.

It belongs to the ligand-gated ion channel (TC 1.A.9) family. Gamma-aminobutyric acid receptor (TC 1.A.9.5) subfamily. GABRA2 sub-subfamily. As to quaternary structure, heteropentamer, formed by a combination of alpha (GABRA1-6), beta (GABRB1-3), gamma (GABRG1-3), delta (GABRD), epsilon (GABRE), rho (GABRR1-3), pi (GABRP) and theta (GABRQ) subunits, each subunit exhibiting distinct physiological and pharmacological properties. Interacts with UBQLN1. Interacts with KIF21B. Interacts with LHFPL4. Interacts with SHISA7; interaction leads to the regulation of GABA(A) receptor trafficking, channel deactivation kinetics and pharmacology. Post-translationally, glycosylated.

It is found in the postsynaptic cell membrane. The protein resides in the cell membrane. Its subcellular location is the cytoplasmic vesicle membrane. It localises to the cell projection. The protein localises to the dendrite. The enzyme catalyses chloride(in) = chloride(out). Its activity is regulated as follows. Activated by pentobarbital. Inhibited by the antagonist bicuculline. Functionally, alpha subunit of the heteropentameric ligand-gated chloride channel gated by gamma-aminobutyric acid (GABA), a major inhibitory neurotransmitter in the brain. GABA-gated chloride channels, also named GABA(A) receptors (GABAAR), consist of five subunits arranged around a central pore and contain GABA active binding site(s) located at the alpha and beta subunit interfaces. When activated by GABA, GABAARs selectively allow the flow of chloride anions across the cell membrane down their electrochemical gradient. Chloride influx into the postsynaptic neuron following GABAAR opening decreases the neuron ability to generate a new action potential, thereby reducing nerve transmission. The alpha-2 subunit exhibits synaptogenic activity together with beta-2 and very little to no activity together with beta-3, the gamma-2 subunit being necessary but not sufficient to induce rapid synaptic contacts formation. This chain is Gamma-aminobutyric acid receptor subunit alpha-2, found in Homo sapiens (Human).